A 250-amino-acid polypeptide reads, in one-letter code: Zinc finger protein lsy-27 (250 aa).

C2H2-type zinc fingers lie at residues Phe25–His48 and His52–His75. The segment at Phe81–Gln104 adopts a C2H2-type 3; degenerate zinc-finger fold. Disordered stretches follow at residues Ile126–Arg177 and Gln226–Glu250. The segment covering Ser148–Ser165 has biased composition (low complexity). Positions Met239–Glu250 are enriched in basic and acidic residues.

Functionally, involved in regulating left/right asymmetric differentiation of the gustatory ASE neurons. Plays a role in modulating expression of LIM/homeobox protein lim-6. The polypeptide is Zinc finger protein lsy-27 (Caenorhabditis elegans).